The sequence spans 178 residues: RNA pyrophosphohydrolase (178 aa).

The Nudix hydrolase domain maps to proline 18–alanine 171. The Nudix box signature appears at glycine 59–glycine 80.

The protein belongs to the Nudix hydrolase family. RppH subfamily. The cofactor is a divalent metal cation.

In terms of biological role, accelerates the degradation of transcripts by removing pyrophosphate from the 5'-end of triphosphorylated RNA, leading to a more labile monophosphorylated state that can stimulate subsequent ribonuclease cleavage. In Brucella canis (strain ATCC 23365 / NCTC 10854 / RM-666), this protein is RNA pyrophosphohydrolase.